The following is a 285-amino-acid chain: NADPH-dependent 7-cyano-7-deazaguanine reductase (285 aa).

Position 91–93 (91–93) interacts with substrate; it reads IES. 93 to 94 contacts NADPH; the sequence is SK. The active-site Thioimide intermediate is the C193. D200 (proton donor) is an active-site residue. Substrate is bound at residue 232–233; sequence HE. Position 261–262 (261–262) interacts with NADPH; that stretch reads RG.

Belongs to the GTP cyclohydrolase I family. QueF type 2 subfamily. Homodimer.

Its subcellular location is the cytoplasm. It catalyses the reaction 7-aminomethyl-7-carbaguanine + 2 NADP(+) = 7-cyano-7-deazaguanine + 2 NADPH + 3 H(+). It participates in tRNA modification; tRNA-queuosine biosynthesis. Its function is as follows. Catalyzes the NADPH-dependent reduction of 7-cyano-7-deazaguanine (preQ0) to 7-aminomethyl-7-deazaguanine (preQ1). The chain is NADPH-dependent 7-cyano-7-deazaguanine reductase from Shewanella frigidimarina (strain NCIMB 400).